The primary structure comprises 313 residues: Iron-sulfur protein required for NADH dehydrogenase, mitochondrial (313 aa).

Residues 1–22 (MATVALLRSLRRRELHAAHISA) constitute a mitochondrion transit peptide. 51 to 58 (GKGGVGKS) is an ATP binding site.

Belongs to the Mrp/NBP35 ATP-binding proteins family. It depends on [4Fe-4S] cluster as a cofactor.

It is found in the mitochondrion matrix. Essential during early vegetative growth. Required for the assembly of the mitochondrial membrane respiratory chain NADH dehydrogenase (Complex I). Involved in mitochondrial translation activity. May deliver of one or more Fe-S clusters to complex I subunits. The sequence is that of Iron-sulfur protein required for NADH dehydrogenase, mitochondrial from Arabidopsis thaliana (Mouse-ear cress).